A 453-amino-acid chain; its full sequence is Nuclear distribution protein PAC1 (453 aa).

The LisH domain occupies 19–51 (QKDELHKSILDYFKTNNLHESFATLMREANQEG). Residues 69–96 (TSVIRLQKKIMEMESRISQLQEELSAAP) are a coiled coil. WD repeat units lie at residues 120-161 (GHRL…RTLK), 162-201 (GHTKAVQDVDFDSKGNYVLSCSSDLSIKVWDANNDYKNIK), 205-244 (GHDHSVSSVRFLPGDDYIVSASRDKTIKIWEFSTGFCTKT), 247-286 (GHAEWVRSAIPSDDAKWLVSCSTDQTARVWDVSSGETKVE), 314-355 (LDPN…KTLT), 356-395 (GHDNWVRGLAFSPNGKSLLSVSDDKTMRLWDLQSGRCTRT), and 413-452 (IEAPIPPAQDGEEAGRKQPEARTVNVVATSSVDLTIKIWT).

The protein belongs to the WD repeat LIS1/nudF family. As to quaternary structure, self-associates. Interacts with NDL1 and dynein.

The protein resides in the cytoplasm. The protein localises to the cytoskeleton. It localises to the spindle pole. Positively regulates the activity of the minus-end directed microtubule motor protein dynein. May enhance dynein-mediated microtubule sliding by targeting dynein to the microtubule plus end. Required for nuclear migration during vegetative growth as well as development. Required for localization of dynein to the mitotic spindle poles. Recruits additional proteins to the dynein complex at SPBs. Required for retrograde early endosome (EE) transport from the hyphal tip. This Mycosarcoma maydis (Corn smut fungus) protein is Nuclear distribution protein PAC1.